Here is a 320-residue protein sequence, read N- to C-terminus: Nodulation efficiency protein NfeD (320 aa).

The protein belongs to the ornithine cyclodeaminase/mu-crystallin family.

In terms of biological role, seems to be involved in the nodulation efficiency of R.meliloti GR4 on alfalfa roots. The chain is Nodulation efficiency protein NfeD from Rhizobium meliloti (Ensifer meliloti).